We begin with the raw amino-acid sequence, 174 residues long: Adipose-secreted signaling protein (174 aa).

A2 is subject to N-acetylalanine. At T147 the chain carries Phosphothreonine.

This sequence belongs to the ADISSP family.

The protein resides in the secreted. Its function is as follows. Adipocyte-secreted protein (adipokine) that acts as a key regulator for white adipose tissue (WAT) thermogenesis and glucose homeostasis at least in part through activation of protein kinase A (PKA). The sequence is that of Adipose-secreted signaling protein from Homo sapiens (Human).